Reading from the N-terminus, the 83-residue chain is Disintegrin isoform D-3 (83 aa).

Residues 2 to 83 (PPVCGNELLE…GKSSDCPWNH (82 aa)) form the Disintegrin domain. Cystine bridges form between Cys5–Cys24, Cys16–Cys34, Cys18–Cys29, Cys28–Cys51, Cys42–Cys48, Cys47–Cys72, and Cys60–Cys79. The short motif at 64–66 (RGD) is the Cell attachment site element.

This sequence belongs to the venom metalloproteinase (M12B) family. P-II subfamily. P-IIa sub-subfamily. Monomer (disintegrin). In terms of tissue distribution, expressed by the venom gland.

The protein resides in the secreted. Its function is as follows. Inhibits fibrinogen interaction with platelets. Acts by binding to alpha-IIb/beta-3 (ITGA2B/ITGB3) on the platelet surface and inhibits aggregation induced by ADP, thrombin, platelet-activating factor and collagen. The chain is Disintegrin isoform D-3 from Bitis arietans (African puff adder).